We begin with the raw amino-acid sequence, 207 residues long: Recombination protein RecR (207 aa).

The C4-type zinc-finger motif lies at 60–75; sequence CRHCHNISDSDVCTIC. One can recognise a Toprim domain in the interval 83 to 178; it reads STLCVVENIR…RVSVIARGIA (96 aa).

Belongs to the RecR family.

Functionally, may play a role in DNA repair. It seems to be involved in an RecBC-independent recombinational process of DNA repair. It may act with RecF and RecO. The protein is Recombination protein RecR of Porphyromonas gingivalis (strain ATCC BAA-308 / W83).